A 127-amino-acid chain; its full sequence is Large ribosomal subunit protein bL20 (127 aa).

Belongs to the bacterial ribosomal protein bL20 family.

Functionally, binds directly to 23S ribosomal RNA and is necessary for the in vitro assembly process of the 50S ribosomal subunit. It is not involved in the protein synthesizing functions of that subunit. This is Large ribosomal subunit protein bL20 from Corynebacterium urealyticum (strain ATCC 43042 / DSM 7109).